Consider the following 499-residue polypeptide: MTYLLALDQGTSSSRSIVFDRGGRIRAMAQREFRQLYPQPGWVEHDPMEIWETQLATAREALAQAGLTASDIAAIGITNQRETTLLWERASGRPIANAIVWQDRRTEPLCARWREQGLADAVRDVTGLVIDPYFSASKIAWLLDHVPGARTRAERGELAFGTVDSWLLRQLTGGRVHATDTTNASRTMLFDIDRGAWSEPLLAALDIPRALLPAVQQSASHFGDTEPALLGHAVPVCGIAGDQQAALFGQAGFQAGLAKNTYGTGCFLLMHTGAQRQASTHGLITTAAAQVDSTAPRQYALEGSVFIGGAVVQWLRDGLHAIRGSGEVQALAESVPDAGGVVVVPAFTGLGAPYWRPEASGAIVGLTRGSTVAHIARAALESIAFQSAALLDAMSRDAVAAGGQPVSELRVDGGACVNDLLMQFQADLLGIPVVRPQVIETTALGAACLAGLGCGLYAGTDELAAQWQAERRFLPTMPRERAAERMARWERAVRQTVAP.

Position 11 (Thr-11) interacts with ADP. Positions 11, 12, and 13 each coordinate ATP. Thr-11 provides a ligand contact to sn-glycerol 3-phosphate. An ADP-binding site is contributed by Arg-15. Residues Arg-81, Glu-82, Tyr-133, and Asp-242 each coordinate sn-glycerol 3-phosphate. Glycerol-binding residues include Arg-81, Glu-82, Tyr-133, Asp-242, and Gln-243. 2 residues coordinate ADP: Thr-264 and Gly-309. Residues Thr-264, Gly-309, Gln-313, and Gly-414 each contribute to the ATP site. The ADP site is built by Gly-414 and Asn-418.

Belongs to the FGGY kinase family.

The enzyme catalyses glycerol + ATP = sn-glycerol 3-phosphate + ADP + H(+). The protein operates within polyol metabolism; glycerol degradation via glycerol kinase pathway; sn-glycerol 3-phosphate from glycerol: step 1/1. Inhibited by fructose 1,6-bisphosphate (FBP). In terms of biological role, key enzyme in the regulation of glycerol uptake and metabolism. Catalyzes the phosphorylation of glycerol to yield sn-glycerol 3-phosphate. This Methylibium petroleiphilum (strain ATCC BAA-1232 / LMG 22953 / PM1) protein is Glycerol kinase.